A 428-amino-acid polypeptide reads, in one-letter code: 5'-nucleotidase domain-containing protein 4 (428 aa).

Residue aspartate 22 is the Nucleophile of the active site. Positions 22, 24, and 317 each coordinate Mg(2+). Aspartate 24 (proton donor) is an active-site residue.

The protein belongs to the 5'(3')-deoxyribonucleotidase family.

This is 5'-nucleotidase domain-containing protein 4 (NT5DC4) from Homo sapiens (Human).